The primary structure comprises 100 residues: Integration host factor subunit alpha (100 aa).

Belongs to the bacterial histone-like protein family. In terms of assembly, heterodimer of an alpha and a beta chain.

This protein is one of the two subunits of integration host factor, a specific DNA-binding protein that functions in genetic recombination as well as in transcriptional and translational control. The protein is Integration host factor subunit alpha of Methylobacillus flagellatus (strain ATCC 51484 / DSM 6875 / VKM B-1610 / KT).